The following is a 365-amino-acid chain: MIWLKNLRVPILLAIILVVYNEYFIFFIAFSSCQWPCKYGRCSESSVKAFMISDTHLLGKINGHWLDKLKREWQMYQSFWISTWIHSPDVTFFLGDLMDEGKWAGRPVFEAYAERFKKLFGDNEKVITLAGNHDLGFHYAIMPETLEMFKKEFRRGLIDEMKIKKHRFVLINSMAMHGDGCRLCHEAELILEKIKSRNPKNRPIVLQHFPLYRKSDAECDQVDEQHEIDLKEMYREQWDTLSKESSLQIIDSLNPKAVFGGHTHKMCKKKWNKTGNSEYFYEYTVNSFSWRNGDVPAMLLVVIDGDNVLVSSCRLPSEILQIMVYIFGGIGIVILAFILISRRVRIFKRRPSYSLLMYRSQEKCD.

Residues P10–F30 form a helical membrane-spanning segment. Residues D54, D96, N132, H208, H262, and H264 each contribute to the a divalent metal cation site. The helical transmembrane segment at I319–L339 threads the bilayer.

The protein belongs to the metallophosphoesterase superfamily. MPPE1 family. The cofactor is Mn(2+).

It is found in the endoplasmic reticulum-Golgi intermediate compartment membrane. It localises to the golgi apparatus. Its subcellular location is the cis-Golgi network membrane. Metallophosphoesterase required for transport of GPI-anchor proteins from the endoplasmic reticulum to the Golgi. Acts in lipid remodeling steps of GPI-anchor maturation by mediating the removal of a side-chain ethanolamine-phosphate (EtNP) from the second Man (Man2) of the GPI intermediate, an essential step for efficient transport of GPI-anchor proteins. The protein is Metallophosphoesterase 1 homolog of Caenorhabditis elegans.